The following is a 141-amino-acid chain: Ribosome-binding factor A (141 aa).

This sequence belongs to the RbfA family. As to quaternary structure, monomer. Binds 30S ribosomal subunits, but not 50S ribosomal subunits or 70S ribosomes.

The protein localises to the cytoplasm. One of several proteins that assist in the late maturation steps of the functional core of the 30S ribosomal subunit. Associates with free 30S ribosomal subunits (but not with 30S subunits that are part of 70S ribosomes or polysomes). Required for efficient processing of 16S rRNA. May interact with the 5'-terminal helix region of 16S rRNA. The sequence is that of Ribosome-binding factor A from Maricaulis maris (strain MCS10) (Caulobacter maris).